The following is a 235-amino-acid chain: Cytidylate kinase (235 aa).

Residue 16-24 (GPAASGKST) participates in ATP binding.

The protein belongs to the cytidylate kinase family. Type 1 subfamily.

The protein localises to the cytoplasm. The catalysed reaction is CMP + ATP = CDP + ADP. It carries out the reaction dCMP + ATP = dCDP + ADP. This chain is Cytidylate kinase, found in Chloroherpeton thalassium (strain ATCC 35110 / GB-78).